A 744-amino-acid chain; its full sequence is 3-isopropylmalate dehydratase (744 aa).

[4Fe-4S] cluster is bound by residues Cys-341, Cys-401, and Cys-404.

Belongs to the aconitase/IPM isomerase family. In terms of assembly, monomer. Requires [4Fe-4S] cluster as cofactor.

It catalyses the reaction (2R,3S)-3-isopropylmalate = (2S)-2-isopropylmalate. The protein operates within amino-acid biosynthesis; L-leucine biosynthesis; L-leucine from 3-methyl-2-oxobutanoate: step 2/4. Its function is as follows. Catalyzes the isomerization between 2-isopropylmalate and 3-isopropylmalate, via the formation of 2-isopropylmaleate. This chain is 3-isopropylmalate dehydratase (leu1), found in Phycomyces blakesleeanus (strain ATCC 8743b / DSM 1359 / FGSC 10004 / NBRC 33097 / NRRL 1555).